The following is a 59-amino-acid chain: Large ribosomal subunit protein bL32 (59 aa).

A disordered region spans residues 1 to 59 (MAVQQNKKSPSKRGMHRAHDFLTTPPLAVESTTGEAHLRHHISPAGFYRGKKVTKGKGE). Residues 49 to 59 (RGKKVTKGKGE) are compositionally biased toward basic residues.

This sequence belongs to the bacterial ribosomal protein bL32 family.

This chain is Large ribosomal subunit protein bL32, found in Dechloromonas aromatica (strain RCB).